A 61-amino-acid polypeptide reads, in one-letter code: MAEQKKIRVTLVKSLIGTIESHRACARGLGLRRREHTVEVLDTSENRGMINKISYLLKVES.

It belongs to the universal ribosomal protein uL30 family. In terms of assembly, part of the 50S ribosomal subunit.

The protein is Large ribosomal subunit protein uL30 of Neisseria gonorrhoeae (strain ATCC 700825 / FA 1090).